Consider the following 228-residue polypeptide: Phosphoribosylformylglycinamidine synthase subunit PurQ (228 aa).

The region spanning 3–226 (FAVIVFPGSN…IANWRDSYAI (224 aa)) is the Glutamine amidotransferase type-1 domain. The active-site Nucleophile is cysteine 87. Active-site residues include histidine 195 and glutamate 197.

Part of the FGAM synthase complex composed of 1 PurL, 1 PurQ and 2 PurS subunits.

It localises to the cytoplasm. It catalyses the reaction N(2)-formyl-N(1)-(5-phospho-beta-D-ribosyl)glycinamide + L-glutamine + ATP + H2O = 2-formamido-N(1)-(5-O-phospho-beta-D-ribosyl)acetamidine + L-glutamate + ADP + phosphate + H(+). The catalysed reaction is L-glutamine + H2O = L-glutamate + NH4(+). The protein operates within purine metabolism; IMP biosynthesis via de novo pathway; 5-amino-1-(5-phospho-D-ribosyl)imidazole from N(2)-formyl-N(1)-(5-phospho-D-ribosyl)glycinamide: step 1/2. Part of the phosphoribosylformylglycinamidine synthase complex involved in the purines biosynthetic pathway. Catalyzes the ATP-dependent conversion of formylglycinamide ribonucleotide (FGAR) and glutamine to yield formylglycinamidine ribonucleotide (FGAM) and glutamate. The FGAM synthase complex is composed of three subunits. PurQ produces an ammonia molecule by converting glutamine to glutamate. PurL transfers the ammonia molecule to FGAR to form FGAM in an ATP-dependent manner. PurS interacts with PurQ and PurL and is thought to assist in the transfer of the ammonia molecule from PurQ to PurL. The chain is Phosphoribosylformylglycinamidine synthase subunit PurQ from Oceanobacillus iheyensis (strain DSM 14371 / CIP 107618 / JCM 11309 / KCTC 3954 / HTE831).